A 475-amino-acid polypeptide reads, in one-letter code: Chromosomal replication initiator protein DnaA (475 aa).

Positions methionine 1–aspartate 73 are domain I, interacts with DnaA modulators. The tract at residues aspartate 73 to serine 131 is domain II. A domain III, AAA+ region region spans residues proline 132–serine 354. ATP is bound by residues glycine 179, glycine 181, lysine 182, and threonine 183. The interval lysine 355 to glutamate 475 is domain IV, binds dsDNA.

Belongs to the DnaA family. Oligomerizes as a right-handed, spiral filament on DNA at oriC.

Its subcellular location is the cytoplasm. In terms of biological role, plays an essential role in the initiation and regulation of chromosomal replication. ATP-DnaA binds to the origin of replication (oriC) to initiate formation of the DNA replication initiation complex once per cell cycle. Binds the DnaA box (a 9 base pair repeat at the origin) and separates the double-stranded (ds)DNA. Forms a right-handed helical filament on oriC DNA; dsDNA binds to the exterior of the filament while single-stranded (ss)DNA is stabiized in the filament's interior. The ATP-DnaA-oriC complex binds and stabilizes one strand of the AT-rich DNA unwinding element (DUE), permitting loading of DNA polymerase. After initiation quickly degrades to an ADP-DnaA complex that is not apt for DNA replication. Binds acidic phospholipids. The polypeptide is Chromosomal replication initiator protein DnaA (Nitrobacter winogradskyi (strain ATCC 25391 / DSM 10237 / CIP 104748 / NCIMB 11846 / Nb-255)).